Consider the following 591-residue polypeptide: Negative elongation factor D (591 aa).

A disordered region spans residues 1–44; the sequence is MAGPAPGTIMGEDYFGNASEWGEEADGGQHQEDDSGEGEDDAEV. Residues 34–44 show a composition bias toward acidic residues; that stretch reads DSGEGEDDAEV.

It belongs to the NELF-D family. As to quaternary structure, the NELF complex is composed of NELFA, NELFB, NELFCD and NELFE; NELFA and NELFCD form a stable subcomplex that binds primarily through NELFCD to the N-terminus of NELFB. Binds RNA which may help to stabilize the NELF complex on nucleic acid. In vitro, the NELFA:NELFCD subcomplex binds to ssDNA and ssRNA in a sequence- and structure-dependent manner. Interacts with ARAF1. Interacts with PCF11. Interacts with NELFB. Interacts with KAT8.

The protein resides in the nucleus. In terms of biological role, essential component of the NELF complex, a complex that negatively regulates the elongation of transcription by RNA polymerase II. The NELF complex, which acts via an association with the DSIF complex and causes transcriptional pausing, is counteracted by the P-TEFb kinase complex. The chain is Negative elongation factor D (Nelfcd) from Mus musculus (Mouse).